The following is a 1842-amino-acid chain: Fatty acid synthase subunit alpha (1842 aa).

The segment at 101–141 is disordered; it reads PAEAPASTSSTPKVETAAAAAPAATPAPAPAQTSAPAAALP. The segment covering 116–139 has biased composition (low complexity); that stretch reads TAAAAAPAATPAPAPAQTSAPAAA. Positions 145 to 220 constitute a Carrier domain; that stretch reads PKALEVLHTL…AIMQSSFNGS (76 aa). S180 is subject to O-(pantetheine 4'-phosphoryl)serine. S604 carries the post-translational modification Phosphoserine. The Ketosynthase family 3 (KS3) domain occupies 1079 to 1616; it reads LQEVVIDHDL…QVGGQVIVIH (538 aa). The active-site For beta-ketoacyl synthase activity is C1262. Residues 1304–1332 are disordered; it reads GATSNAAKETERGRTPQEMSRPATSTRDG. S1412 is subject to Phosphoserine. Active-site for beta-ketoacyl synthase activity residues include H1501 and H1542. 3 residues coordinate Mg(2+): D1728, V1729, and E1730. Acetyl-CoA-binding positions include 1728–1730, Y1754, S1764, 1773–1783, 1797–1800, and 1827–1829; these read DVE, EAVFKSLGISG, SSES, and ISH. Mg(2+)-binding residues include S1828 and H1829.

The protein belongs to the thiolase-like superfamily. Fungal fatty acid synthetase subunit alpha family. [Alpha(6)beta(6)] hexamers of two multifunctional subunits (alpha and beta).

The enzyme catalyses acetyl-CoA + n malonyl-CoA + 2n NADPH + 4n H(+) = a long-chain-acyl-CoA + n CoA + n CO2 + 2n NADP(+).. It carries out the reaction a fatty acyl-[ACP] + malonyl-[ACP] + H(+) = a 3-oxoacyl-[ACP] + holo-[ACP] + CO2. It catalyses the reaction a (3R)-hydroxyacyl-[ACP] + NADP(+) = a 3-oxoacyl-[ACP] + NADPH + H(+). In terms of biological role, fatty acid synthetase catalyzes the formation of long-chain fatty acids from acetyl-CoA, malonyl-CoA and NADPH. The alpha subunit contains domains for: acyl carrier protein, 3-oxoacyl-[acyl-carrier-protein] reductase, and 3-oxoacyl-[acyl-carrier-protein] synthase. This subunit coordinates the binding of the six beta subunits to the enzyme complex. The sequence is that of Fatty acid synthase subunit alpha (fas2) from Schizosaccharomyces pombe (strain 972 / ATCC 24843) (Fission yeast).